Reading from the N-terminus, the 535-residue chain is Peptide chain release factor 3 (535 aa).

Positions 8 to 278 (ARRRTFAIIS…VDQAPAPGPR (271 aa)) constitute a tr-type G domain. GTP-binding positions include 17–24 (SHPDAGKT), 85–89 (DTPGH), and 139–142 (NKLD).

It belongs to the TRAFAC class translation factor GTPase superfamily. Classic translation factor GTPase family. PrfC subfamily.

It localises to the cytoplasm. Increases the formation of ribosomal termination complexes and stimulates activities of RF-1 and RF-2. It binds guanine nucleotides and has strong preference for UGA stop codons. It may interact directly with the ribosome. The stimulation of RF-1 and RF-2 is significantly reduced by GTP and GDP, but not by GMP. The sequence is that of Peptide chain release factor 3 from Bordetella parapertussis (strain 12822 / ATCC BAA-587 / NCTC 13253).